We begin with the raw amino-acid sequence, 486 residues long: Galactose-1-phosphate uridylyltransferase (486 aa).

It belongs to the galactose-1-phosphate uridylyltransferase type 2 family.

Its subcellular location is the cytoplasm. It catalyses the reaction alpha-D-galactose 1-phosphate + UDP-alpha-D-glucose = alpha-D-glucose 1-phosphate + UDP-alpha-D-galactose. The protein operates within carbohydrate metabolism; galactose metabolism. The sequence is that of Galactose-1-phosphate uridylyltransferase from Pediococcus pentosaceus (strain ATCC 25745 / CCUG 21536 / LMG 10740 / 183-1w).